The primary structure comprises 463 residues: Cysteine--tRNA ligase (463 aa).

Cys-29 lines the Zn(2+) pocket. The 'HIGH' region motif lies at 31–41 (PTVYDFAHIGN). Zn(2+)-binding residues include Cys-227, His-252, and Glu-256. The 'KMSKS' region motif lies at 285 to 289 (KMSKS). Lys-288 is an ATP binding site.

Belongs to the class-I aminoacyl-tRNA synthetase family. In terms of assembly, monomer. Zn(2+) is required as a cofactor.

Its subcellular location is the cytoplasm. It carries out the reaction tRNA(Cys) + L-cysteine + ATP = L-cysteinyl-tRNA(Cys) + AMP + diphosphate. This is Cysteine--tRNA ligase from Rhodopseudomonas palustris (strain BisA53).